The following is a 76-amino-acid chain: RNA-binding protein KhpA (76 aa).

One can recognise a KH domain in the interval 29 to 76 (QNIIELRVSPKDVGKVIGKNGRIAKSLRAILTAASVKAGKNFSLEIID).

It belongs to the KhpA RNA-binding protein family. As to quaternary structure, forms a complex with KhpB.

It localises to the cytoplasm. A probable RNA chaperone. Forms a complex with KhpB which binds to cellular RNA and controls its expression. Plays a role in peptidoglycan (PG) homeostasis and cell length regulation. The sequence is that of RNA-binding protein KhpA from Leptospira interrogans serogroup Icterohaemorrhagiae serovar copenhageni (strain Fiocruz L1-130).